We begin with the raw amino-acid sequence, 1452 residues long: Receptor-type tyrosine-protein phosphatase mu (1452 aa).

The N-terminal stretch at methionine 1–glycine 20 is a signal peptide. Over glutamate 21–lysine 742 the chain is Extracellular. The MAM domain maps to threonine 22–arginine 184. Cysteine 27 and cysteine 36 are disulfide-bonded. Asparagine 72, asparagine 92, asparagine 131, and asparagine 249 each carry an N-linked (GlcNAc...) asparagine glycan. 2 disulfide bridges follow: cysteine 96/cysteine 182 and cysteine 206/cysteine 260. The Ig-like C2-type domain occupies proline 186–valine 277. 4 consecutive Fibronectin type-III domains span residues proline 284–proline 379, glycine 382–aspartate 480, proline 482–serine 587, and proline 589–glutamine 671. 8 N-linked (GlcNAc...) asparagine glycosylation sites follow: asparagine 406, asparagine 414, asparagine 454, asparagine 534, asparagine 544, asparagine 598, asparagine 651, and asparagine 681. Residues isoleucine 743–methionine 764 form a helical membrane-spanning segment. At lysine 765 to glycine 1452 the chain is on the cytoplasmic side. Serine 821 is modified (phosphoserine). Tyrosine-protein phosphatase domains are found at residues phenylalanine 900–alanine 1154 and isoleucine 1186–tyrosine 1448. Substrate-binding positions include aspartate 1063, cysteine 1095–arginine 1101, and glutamine 1139. The active-site Phosphocysteine intermediate is cysteine 1095. Catalysis depends on cysteine 1389, which acts as the Phosphocysteine intermediate.

This sequence belongs to the protein-tyrosine phosphatase family. Receptor class 2B subfamily. In terms of assembly, homodimer.

The protein resides in the cell membrane. The enzyme catalyses O-phospho-L-tyrosyl-[protein] + H2O = L-tyrosyl-[protein] + phosphate. In terms of biological role, receptor protein-tyrosine phosphatase that mediates homotypic cell-cell interactions and plays a role in adipogenic differentiation via modulation of p120 catenin/CTNND1 phosphorylation. Promotes CTNND1 dephosphorylation and prevents its cytoplasmic localization where it inhibits SLC2A4 membrane trafficking. In turn, SLC2A4 is directed to the plasma membrane and performs its glucose transporter function. This is Receptor-type tyrosine-protein phosphatase mu (PTPRM) from Homo sapiens (Human).